A 311-amino-acid polypeptide reads, in one-letter code: Heparan sulfate glucosamine 3-O-sulfotransferase 1 (311 aa).

The first 20 residues, 1-20, serve as a signal peptide directing secretion; that stretch reads MTLLLLGAVLLVAQPQLVHS. The N-linked (GlcNAc...) asparagine glycan is linked to asparagine 52. Residues 68–72, arginine 151, and serine 159 contribute to the 3'-phosphoadenylyl sulfate site; that span reads KGGTR. Asparagine 196, asparagine 246, and asparagine 253 each carry an N-linked (GlcNAc...) asparagine glycan. Tyrosine 259 provides a ligand contact to 3'-phosphoadenylyl sulfate. Cysteines 260 and 269 form a disulfide. 274 to 278 serves as a coordination point for 3'-phosphoadenylyl sulfate; the sequence is KGRAH.

This sequence belongs to the sulfotransferase 1 family.

The protein resides in the golgi apparatus lumen. It carries out the reaction alpha-D-glucosaminyl-[heparan sulfate](n) + 3'-phosphoadenylyl sulfate = 3-sulfo-alpha-D-glucosaminyl-[heparan sulfate](n) + adenosine 3',5'-bisphosphate + H(+). Its function is as follows. Sulfotransferase that utilizes 3'-phospho-5'-adenylyl sulfate (PAPS) to catalyze the transfer of a sulfo group to position 3 of glucosamine residues in heparan. Catalyzes the rate limiting step in the biosynthesis of heparan sulfate (HSact). This modification is a crucial step in the biosynthesis of anticoagulant heparan sulfate as it completes the structure of the antithrombin pentasaccharide binding site. The polypeptide is Heparan sulfate glucosamine 3-O-sulfotransferase 1 (Hs3st1) (Mus musculus (Mouse)).